We begin with the raw amino-acid sequence, 460 residues long: ATP synthase subunit beta (460 aa).

150–157 (GGAGVGKT) serves as a coordination point for ATP.

This sequence belongs to the ATPase alpha/beta chains family. F-type ATPases have 2 components, CF(1) - the catalytic core - and CF(0) - the membrane proton channel. CF(1) has five subunits: alpha(3), beta(3), gamma(1), delta(1), epsilon(1). CF(0) has three main subunits: a(1), b(2) and c(9-12). The alpha and beta chains form an alternating ring which encloses part of the gamma chain. CF(1) is attached to CF(0) by a central stalk formed by the gamma and epsilon chains, while a peripheral stalk is formed by the delta and b chains.

It localises to the cell inner membrane. It carries out the reaction ATP + H2O + 4 H(+)(in) = ADP + phosphate + 5 H(+)(out). Its function is as follows. Produces ATP from ADP in the presence of a proton gradient across the membrane. The catalytic sites are hosted primarily by the beta subunits. The sequence is that of ATP synthase subunit beta from Pectobacterium carotovorum subsp. carotovorum (strain PC1).